A 467-amino-acid polypeptide reads, in one-letter code: Transcription factor TGAL7 (467 aa).

Basic and acidic residues predominate over residues 1-10 (MGGSREEDRQ). Disordered stretches follow at residues 1 to 42 (MGGS…KESS) and 105 to 184 (QLQV…KTLR). Low complexity predominate over residues 25-41 (SSSPTTMIASSSMSKES). The span at 120–129 (QGGQKINSSV) shows a compositional bias: polar residues. Residues 145–157 (KDNKNSSLIKKEG) are compositionally biased toward basic and acidic residues. Residues 158-168 (SSSGKGATTSN) are compositionally biased toward polar residues. A compositionally biased stretch (basic and acidic residues) spans 169–182 (DPEREGRRTLDPKT). One can recognise a bZIP domain in the interval 179–223 (DPKTLRRLAQNREAARKSRLRKKAYIQQLESSRIRLSQLEQQVHV). The segment at 181-201 (KTLRRLAQNREAARKSRLRKK) is basic motif. The segment at 207–221 (LESSRIRLSQLEQQV) is leucine-zipper. The 212-residue stretch at 247–458 (ASLFDLEYGR…RALSTLWVAR (212 aa)) folds into the DOG1 domain.

It belongs to the bZIP family. As to quaternary structure, interacts with NPR5/NH4, NH5.1 and NH5.2.

It is found in the nucleus. Transcriptional regulator involved in defense response. The polypeptide is Transcription factor TGAL7 (Oryza sativa subsp. japonica (Rice)).